We begin with the raw amino-acid sequence, 223 residues long: Transcription factor bHLH75 (223 aa).

Residues 58 to 100 are disordered; it reads FPNLLHGNTRRKGNKEESGSKRRRKRSEEEEAMNGDETQKPKD. In terms of domain architecture, bHLH spans 110–160; it reads QATDSHSLAERVRREKINERLKCLQDLVPGCYKAMGMAVMLDVIIDYVRSL.

In terms of assembly, homodimer. As to expression, expressed in leaves, stems, and flowers.

The protein resides in the nucleus. The protein is Transcription factor bHLH75 (BHLH75) of Arabidopsis thaliana (Mouse-ear cress).